Here is a 482-residue protein sequence, read N- to C-terminus: Uric acid transporter UacT (482 aa).

The Cytoplasmic segment spans residues 1 to 29 (MSAIDSQLPSSSGQDRPTDEVDRILSPGK). The chain crosses the membrane as a helical span at residues 30–50 (LIILGLQHVLVMYAGAVAVPL). At 51 to 62 (MIGDRLGLSKEA) the chain is on the periplasmic side. The helical transmembrane segment at 63–83 (IAMLISSDLFCCGIVTLLQCI) threads the bilayer. Topologically, residues 84-92 (GIGRFMGIR) are cytoplasmic. A helical membrane pass occupies residues 93-113 (LPVIMSVTFAAVTPMIAIGMN). The Periplasmic portion of the chain corresponds to 114–115 (PD). Residues 116 to 136 (IGLLGIFGATIAAGFITTLLA) form a helical membrane-spanning segment. The Cytoplasmic segment spans residues 137-142 (PLIGRL). Residues 143–163 (MPLFPPLVTGVVITSIGLSII) form a helical membrane-spanning segment. Residues 164 to 178 (QVGIDWAAGGKGNPQ) lie on the Periplasmic side of the membrane. The helical transmembrane segment at 179–199 (YGNPVYLGISFAVLIFILLIT) threads the bilayer. At 200 to 204 (RYAKG) the chain is on the cytoplasmic side. A helical membrane pass occupies residues 205–225 (FMSNVAVLLGIVFGFLLSWMM). The Periplasmic portion of the chain corresponds to 226–261 (NEVNLSGLHDASWFAIVTPMSFGMPIFDPVSILTMT). The helical transmembrane segment at 262-282 (AVLIIVFIESMGMFLALGEIV) threads the bilayer. Residues 283–337 (GRKLSSHDIIRGLRVDGVGTMIGGTFNSFPHTSFSQNVGLVSVTRVHSRWVCISS) lie on the Cytoplasmic side of the membrane. The helical transmembrane segment at 338 to 358 (GIILILFGMVPKMAVLVASIP) threads the bilayer. Position 359 (Gln359) is a topological domain, periplasmic. A helical membrane pass occupies residues 360-380 (FVLGGAGLVMFGMVLATGIRI). Residues 381–392 (LSRCNYTTNRYN) lie on the Cytoplasmic side of the membrane. A helical membrane pass occupies residues 393 to 413 (LYIVAISLGVGMTPTLSHDFF). The Periplasmic segment spans residues 414 to 421 (SKLPAVLQ). The chain crosses the membrane as a helical span at residues 422–442 (PLLHSGIMLATLSAVVLNVFF). At 443 to 482 (NGYQHHADLVKESVSDKDLKVRTVRMWLLMRKLKKNEHGE) the chain is on the cytoplasmic side.

Belongs to the nucleobase:cation symporter-2 (NCS2) (TC 2.A.40) family.

The protein localises to the cell inner membrane. With respect to regulation, inhibited in the presence of the protonophore carbonyl cyanide m-chlorophenyl hydrazone. Functionally, proton-dependent high-capacity transporter for uric acid. Also shows a low capacity for transport of xanthine at 37 degrees Celsius but not at 25 degrees Celsius. This Escherichia coli (strain K12) protein is Uric acid transporter UacT (uacT).